We begin with the raw amino-acid sequence, 554 residues long: MTSMQAIPDITATPAWDALRRHHDEIGATHLRQFFADNPNRGRELVITVGDLYIDYSKHRITHDTVQLLVDLARAANLEQRRDQMLAGVHVNTSENRSVLHTALRLPRDTELIVDGQNVVQDVHAVLDVMGDFTDRLRSGEWTGATGKRINTVVNIGIGGSDLGPVMVYQALRHYADAGISARFVSNIDPADLTAKLSDLEPGTTLFIVASKTFSTLETLTNATAARRWLTDALGEAAVSKHFVAVSTNKRLVKDFGINTANMFGFWEWVGGRYSVDSAIGLSLMAVVGRESFADFLSGFHIVDQHFQNAPLESNAPVLLGLIGLWYSDFLGAQSRAVLPYSNDLARFAAYLQQLTMESNGKSTRADGTPVTTNTGEIYWGETGTNGQHAFYQLLHQGTRLVPADFIGFSQPIDDLPTVDGIGSMHDLLMSNFFAQTQVLAFGKTAEEIAAEGTPAEVVPHKVMPGNRPTTSILANRLTPSVLGQLIALYEHQVFTEGVIWGIDSFDQWGVELGKKQAEALLPVITGNASPAQQLDSSTDTLVRRYRTERGRTS.

The active-site Proton donor is the E358. Residues H389 and K515 contribute to the active site.

The protein belongs to the GPI family.

The protein localises to the cytoplasm. The catalysed reaction is alpha-D-glucose 6-phosphate = beta-D-fructose 6-phosphate. It participates in carbohydrate biosynthesis; gluconeogenesis. It functions in the pathway carbohydrate degradation; glycolysis; D-glyceraldehyde 3-phosphate and glycerone phosphate from D-glucose: step 2/4. Functionally, catalyzes the reversible isomerization of glucose-6-phosphate to fructose-6-phosphate. This chain is Glucose-6-phosphate isomerase, found in Mycobacterium leprae (strain Br4923).